The chain runs to 675 residues: Dihydrolipoyllysine-residue acetyltransferase component of pyruvate dehydrogenase complex (675 aa).

The 76-residue stretch at 2-77 (AFSVEMPELG…DVGGVIAIIG (76 aa)) folds into the Lipoyl-binding 1 domain. K43 carries the N6-lipoyllysine modification. The segment at 77–124 (GDADETPANEAPADEAPAPAEEEEPVKEEPKKEAAPEAPAATGAATDV) is disordered. Composition is skewed to low complexity over residues 84–95 (ANEAPADEAPAP) and 112–124 (PEAP…ATDV). Residues 121–196 (ATDVEMPELG…DVGAVIARIG (76 aa)) enclose the Lipoyl-binding 2 domain. K162 is modified (N6-lipoyllysine). The interval 200–240 (AAAAPAEEEAAPAEEEEPVKEEPKKEAAPEAPAATGAATDV) is disordered. A compositionally biased stretch (acidic residues) spans 205–218 (AEEEAAPAEEEEPV). One can recognise a Lipoyl-binding 3 domain in the interval 237–312 (ATDVEMPELG…DVGAVIARIG (76 aa)). Residue K278 is modified to N6-lipoyllysine. A disordered region spans residues 316–368 (AAAAPAEEEAAPAEEEEPVKEEPKKEEPKKEEPKKEAATTPAAASATVSASGD). A compositionally biased stretch (acidic residues) spans 321–334 (AEEEAAPAEEEEPV). Positions 335–352 (KEEPKKEEPKKEEPKKEA) are enriched in basic and acidic residues. Low complexity predominate over residues 353–366 (ATTPAAASATVSAS). The region spanning 372–409 (YVTPLVRKLAEKHGVDLNTVTGTGIGGRIRKQDVLAAA) is the Peripheral subunit-binding (PSBD) domain. Residues H645 and D649 contribute to the active site.

It belongs to the 2-oxoacid dehydrogenase family. In terms of assembly, forms a 24-polypeptide structural core with octahedral symmetry. Part of an unusual ODH/PDH supercomplex, consisting of AceE (E1), AceF (E2), and Lpd (E3) together with OdhA (E1+E2). It depends on (R)-lipoate as a cofactor.

The catalysed reaction is N(6)-[(R)-dihydrolipoyl]-L-lysyl-[protein] + acetyl-CoA = N(6)-[(R)-S(8)-acetyldihydrolipoyl]-L-lysyl-[protein] + CoA. Functionally, is essential for both 2-oxoglutarate dehydrogenase (ODH) and pyruvate dehydrogenase (PDH) activities, but AceF has exclusively transacetylase (and no transsuccinylase) activity. The lipoyl residues required for ODH activity are likely provided by AceF. This Corynebacterium glutamicum (strain ATCC 13032 / DSM 20300 / JCM 1318 / BCRC 11384 / CCUG 27702 / LMG 3730 / NBRC 12168 / NCIMB 10025 / NRRL B-2784 / 534) protein is Dihydrolipoyllysine-residue acetyltransferase component of pyruvate dehydrogenase complex (aceF).